A 146-amino-acid polypeptide reads, in one-letter code: Cyanate hydratase (146 aa).

Residues Arg87, Glu90, and Ser113 contribute to the active site.

The protein belongs to the cyanase family.

The enzyme catalyses cyanate + hydrogencarbonate + 3 H(+) = NH4(+) + 2 CO2. In terms of biological role, catalyzes the reaction of cyanate with bicarbonate to produce ammonia and carbon dioxide. This Synechococcus elongatus (strain ATCC 33912 / PCC 7942 / FACHB-805) (Anacystis nidulans R2) protein is Cyanate hydratase.